Here is a 265-residue protein sequence, read N- to C-terminus: Glutamate racemase (265 aa).

Substrate contacts are provided by residues 9-10 (DS) and 41-42 (YG). Catalysis depends on cysteine 72, which acts as the Proton donor/acceptor. A substrate-binding site is contributed by 73–74 (NT). The Proton donor/acceptor role is filled by cysteine 183. 184–185 (TH) is a binding site for substrate.

The protein belongs to the aspartate/glutamate racemases family.

The enzyme catalyses L-glutamate = D-glutamate. It functions in the pathway cell wall biogenesis; peptidoglycan biosynthesis. Its function is as follows. Provides the (R)-glutamate required for cell wall biosynthesis. In Lysinibacillus sphaericus (strain C3-41), this protein is Glutamate racemase.